A 477-amino-acid polypeptide reads, in one-letter code: Prolyl tri/tetrapeptidyl aminopeptidase (477 aa).

The first 27 residues, 1-27 (MRKALRSLLAASMLIGAIGAGSATAEA), serve as a signal peptide directing secretion. The propeptide occupies 28–33 (ASITAP). The tract at residues 448–477 (QKDEKAAKPLAPFDAKLDRVKNDKQSALRP) is disordered. Basic and acidic residues predominate over residues 462–477 (AKLDRVKNDKQSALRP).

The protein belongs to the peptidase S37 family.

It localises to the secreted. Its subcellular location is the cell surface. With respect to regulation, completely inhibited by the serine protease inhibitor phenylmethylsulfonyl fluoride. Partially inhibited by the serine protease inhibitor Pefabloc. Not inhibited by cysteine proteinase-specific or metalloproteinase-specific inhibitors. Not inhibited by prolinal or its derivatives. EDTA and EGTA both partially inhibit this enzyme. EDTA has no effect on activity. In terms of biological role, has proline-specific tripeptidyl aminopeptidase and tetrapeptidyl aminopeptidase activity. Activity is highest against tripeptides containing an Ala-Pro motif. Involved in the final processing of transglutaminase, by removing either the tetrapeptide Phe-Arg-Ala-Pro left after TAMEP or SAM-P45 hydrolysis, or the tripeptide Arg-Ala-Pro left after SGMP II hydrolysis in a single step. The protein is Prolyl tri/tetrapeptidyl aminopeptidase (ptp) of Streptomyces mobaraensis (Streptoverticillium mobaraense).